Reading from the N-terminus, the 416-residue chain is Serine hydroxymethyltransferase (416 aa).

(6S)-5,6,7,8-tetrahydrofolate contacts are provided by residues L121 and 125-127 (GHL). Position 229 is an N6-(pyridoxal phosphate)lysine (K229).

Belongs to the SHMT family. In terms of assembly, homodimer. Requires pyridoxal 5'-phosphate as cofactor.

Its subcellular location is the cytoplasm. The catalysed reaction is (6R)-5,10-methylene-5,6,7,8-tetrahydrofolate + glycine + H2O = (6S)-5,6,7,8-tetrahydrofolate + L-serine. Its pathway is one-carbon metabolism; tetrahydrofolate interconversion. It functions in the pathway amino-acid biosynthesis; glycine biosynthesis; glycine from L-serine: step 1/1. Catalyzes the reversible interconversion of serine and glycine with tetrahydrofolate (THF) serving as the one-carbon carrier. This reaction serves as the major source of one-carbon groups required for the biosynthesis of purines, thymidylate, methionine, and other important biomolecules. Also exhibits THF-independent aldolase activity toward beta-hydroxyamino acids, producing glycine and aldehydes, via a retro-aldol mechanism. In Dechloromonas aromatica (strain RCB), this protein is Serine hydroxymethyltransferase.